The following is a 281-amino-acid chain: MSSYDNHQALAGLTLGKSTDYRDTYDASLLQGVPRSLNRDPLGLHADNLPFHGADIWTLYELSWLNGKGLPQVAVGHVELPDTSVNLVESKSFKLYLNSFNQTRFASWQDVAETLTRDLSACAQGEVKVALYRLDELEGQPIAHLHGACIDDQDIEIDNYQFSTDYLQGAASGKIVEETLVSHLLKSNCLITHQPDWGSVQIQYRGAKIDREQLLRYLVSFRHHNEFHEQCVERIFNDILRFCQPESLSVYARYTRRGGLDINPWRSNGDFSPATGRLARQ.

88–90 contributes to the substrate binding site; the sequence is VES. NADPH is bound at residue 90–91; sequence SK. The active-site Thioimide intermediate is the C189. D196 functions as the Proton donor in the catalytic mechanism. 228-229 provides a ligand contact to substrate; it reads HE. 257–258 is an NADPH binding site; the sequence is RG.

This sequence belongs to the GTP cyclohydrolase I family. QueF type 2 subfamily. In terms of assembly, homodimer.

It localises to the cytoplasm. The enzyme catalyses 7-aminomethyl-7-carbaguanine + 2 NADP(+) = 7-cyano-7-deazaguanine + 2 NADPH + 3 H(+). Its pathway is tRNA modification; tRNA-queuosine biosynthesis. Functionally, catalyzes the NADPH-dependent reduction of 7-cyano-7-deazaguanine (preQ0) to 7-aminomethyl-7-deazaguanine (preQ1). This chain is NADPH-dependent 7-cyano-7-deazaguanine reductase, found in Klebsiella pneumoniae (strain 342).